Reading from the N-terminus, the 218-residue chain is MPMTLGYWDIRGLAHAIRLFLEYTDTSYEDKKYSMGDAPDYDRSQWLSEKFKLGLDFPNLPYLIDGSHKITQSNAILRYLGRKHNLCGETEEERIRVDVLENQAMDTRLQLAMVCYSPDFERKKPEYLEGLPEKMKLYSEFLGKQPWFAGNKITYVDFLVYDVLDQHRIFEPKCLDAFPNLKDFVARFEGLKKISDYMKSGRFLSKPIFAKMAFWNPK.

One can recognise a GST N-terminal domain in the interval 2 to 88 (PMTLGYWDIR…YLGRKHNLCG (87 aa)). Position 7-8 (7-8 (YW)) interacts with glutathione. Residues Ser-27 and Ser-44 each carry the phosphoserine modification. Glutathione contacts are provided by residues 43-46 (RSQW), Lys-50, 59-60 (NL), and 72-73 (QS). Residues 90–214 (TEEERIRVDV…SKPIFAKMAF (125 aa)) enclose the GST C-terminal domain. Tyr-116 contributes to the substrate binding site. Residue Ser-117 is modified to Phosphoserine.

It belongs to the GST superfamily. Mu family. In terms of assembly, homodimer or heterodimer.

It localises to the cytoplasm. The enzyme catalyses RX + glutathione = an S-substituted glutathione + a halide anion + H(+). The catalysed reaction is 11(S)-hydroxy-14(S),15(S)-epoxy-(5Z,8Z,12E)-eicosatrienoate + glutathione = (11S,15S)-dihydroxy-14(R)-S-glutathionyl-(5Z,8Z,12E)-eicosatrienoate. Functionally, conjugation of reduced glutathione to a wide number of exogenous and endogenous hydrophobic electrophiles. Participates in the formation of novel hepoxilin regioisomers. The sequence is that of Glutathione S-transferase Mu 2 from Rattus norvegicus (Rat).